The following is a 599-amino-acid chain: Elongation factor 4 (599 aa).

Positions 5–187 (SHIRNFSIIA…RLVQTIPAPT (183 aa)) constitute a tr-type G domain. GTP-binding positions include 17 to 22 (DHGKST) and 134 to 137 (NKMD).

This sequence belongs to the TRAFAC class translation factor GTPase superfamily. Classic translation factor GTPase family. LepA subfamily.

The protein resides in the cell inner membrane. It catalyses the reaction GTP + H2O = GDP + phosphate + H(+). Its function is as follows. Required for accurate and efficient protein synthesis under certain stress conditions. May act as a fidelity factor of the translation reaction, by catalyzing a one-codon backward translocation of tRNAs on improperly translocated ribosomes. Back-translocation proceeds from a post-translocation (POST) complex to a pre-translocation (PRE) complex, thus giving elongation factor G a second chance to translocate the tRNAs correctly. Binds to ribosomes in a GTP-dependent manner. In Ectopseudomonas mendocina (strain ymp) (Pseudomonas mendocina), this protein is Elongation factor 4.